Here is a 508-residue protein sequence, read N- to C-terminus: Probable protein kinase UbiB (508 aa).

The 377-residue stretch at 118–494 (DFDLKPVASA…QKRQNFLLLL (377 aa)) folds into the Protein kinase domain. ATP contacts are provided by residues 124-132 (VASASVAQV) and K151. D286 (proton acceptor) is an active-site residue. A helical transmembrane segment spans residues 488–508 (QNFLLLLIAILLAALLAKSLL).

It belongs to the ABC1 family. UbiB subfamily.

The protein resides in the cell inner membrane. The protein operates within cofactor biosynthesis; ubiquinone biosynthesis [regulation]. In terms of biological role, is probably a protein kinase regulator of UbiI activity which is involved in aerobic coenzyme Q (ubiquinone) biosynthesis. This Chromobacterium violaceum (strain ATCC 12472 / DSM 30191 / JCM 1249 / CCUG 213 / NBRC 12614 / NCIMB 9131 / NCTC 9757 / MK) protein is Probable protein kinase UbiB.